The sequence spans 352 residues: UDP-N-acetylglucosamine--N-acetylmuramyl-(pentapeptide) pyrophosphoryl-undecaprenol N-acetylglucosamine transferase (352 aa).

Positions 195 and 287 each coordinate UDP-N-acetyl-alpha-D-glucosamine.

This sequence belongs to the glycosyltransferase 28 family. MurG subfamily.

It is found in the cell membrane. It carries out the reaction Mur2Ac(oyl-L-Ala-gamma-D-Glu-L-Lys-D-Ala-D-Ala)-di-trans,octa-cis-undecaprenyl diphosphate + UDP-N-acetyl-alpha-D-glucosamine = beta-D-GlcNAc-(1-&gt;4)-Mur2Ac(oyl-L-Ala-gamma-D-Glu-L-Lys-D-Ala-D-Ala)-di-trans,octa-cis-undecaprenyl diphosphate + UDP + H(+). Its pathway is cell wall biogenesis; peptidoglycan biosynthesis. Its function is as follows. Cell wall formation. Catalyzes the transfer of a GlcNAc subunit on undecaprenyl-pyrophosphoryl-MurNAc-pentapeptide (lipid intermediate I) to form undecaprenyl-pyrophosphoryl-MurNAc-(pentapeptide)GlcNAc (lipid intermediate II). This chain is UDP-N-acetylglucosamine--N-acetylmuramyl-(pentapeptide) pyrophosphoryl-undecaprenol N-acetylglucosamine transferase, found in Streptococcus pneumoniae (strain JJA).